Here is a 161-residue protein sequence, read N- to C-terminus: Eukaryotic translation initiation factor 5A-1 (161 aa).

Hypusine is present on Lys54.

This sequence belongs to the eIF-5A family. In terms of processing, lys-54 undergoes hypusination, a unique post-translational modification that consists in the addition of a butylamino group from spermidine to lysine side chain, leading to the formation of the unusual amino acid hypusine. eIF-5As are the only known proteins to undergo this modification, which is essential for their function. In terms of tissue distribution, expressed specifically in the germline in the distal region of gonads where germ cells actively proliferate.

It localises to the cytoplasm. In terms of biological role, translation factor that promotes translation elongation and termination, particularly upon ribosome stalling at specific amino acid sequence contexts. Binds between the exit (E) and peptidyl (P) site of the ribosome and promotes rescue of stalled ribosome: specifically required for efficient translation of polyproline-containing peptides as well as other motifs that stall the ribosome. Acts as a ribosome quality control (RQC) cofactor by joining the RQC complex to facilitate peptidyl transfer during CAT tailing step. Required for mitotic germ cell proliferation, gametogenesis after entry into meiosis, and localization of the P granule component pgl-1 on P granules. The sequence is that of Eukaryotic translation initiation factor 5A-1 (iff-1) from Caenorhabditis elegans.